Consider the following 65-residue polypeptide: Subtilisin inhibitor CLSI-I (65 aa).

It belongs to the protease inhibitor I13 (potato type I serine protease inhibitor) family.

In terms of biological role, inhibits subtilisin-type microbial serine proteases including proteinase K, subtilisin BPN', subtilisin Carlsberg, subtilisin E, A.oryzae protease and S.griseus alkaline protease. Weakly inhibits pronase E. Does not inhibit trypsin or chymotrypsin. The chain is Subtilisin inhibitor CLSI-I from Canavalia lineata (Beach bean).